The sequence spans 313 residues: Porphobilinogen deaminase (313 aa).

Cys242 carries the post-translational modification S-(dipyrrolylmethanemethyl)cysteine.

It belongs to the HMBS family. Monomer. Requires dipyrromethane as cofactor.

It carries out the reaction 4 porphobilinogen + H2O = hydroxymethylbilane + 4 NH4(+). The protein operates within porphyrin-containing compound metabolism; protoporphyrin-IX biosynthesis; coproporphyrinogen-III from 5-aminolevulinate: step 2/4. Its function is as follows. Tetrapolymerization of the monopyrrole PBG into the hydroxymethylbilane pre-uroporphyrinogen in several discrete steps. The sequence is that of Porphobilinogen deaminase from Pseudomonas fluorescens (strain ATCC BAA-477 / NRRL B-23932 / Pf-5).